The chain runs to 212 residues: Large ribosomal subunit protein uL1 (212 aa).

It belongs to the universal ribosomal protein uL1 family. As to quaternary structure, part of the 50S ribosomal subunit.

In terms of biological role, binds directly to 23S rRNA. Probably involved in E site tRNA release. Functionally, protein L1 is also a translational repressor protein, it controls the translation of its operon by binding to its mRNA. The polypeptide is Large ribosomal subunit protein uL1 (Methanothermobacter thermautotrophicus (strain ATCC 29096 / DSM 1053 / JCM 10044 / NBRC 100330 / Delta H) (Methanobacterium thermoautotrophicum)).